A 163-amino-acid polypeptide reads, in one-letter code: NF-kappa-B inhibitor-interacting Ras-like protein 2 (163 aa).

Residues 1–163 form a small GTPase-like region; it reads MGKSCKVVIC…SANWNLHPDH (163 aa). Residue 11–18 participates in GTP binding; sequence GQHGVGKT. The short motif at 35–43 is the Effector region element; sequence MIETQEDIY. GTP contacts are provided by residues 61-65 and 120-123; these read DTRGL and NKSD.

This sequence belongs to the small GTPase superfamily. Ras family. KappaB-Ras subfamily.

It is found in the cytoplasm. Its function is as follows. Atypical Ras-like protein that acts as a potent regulator of NF-kappa-B activity by preventing the degradation of NF-kappa-B inhibitor beta (NFKBIB) by most signals, explaining why NFKBIB is more resistant to degradation. This chain is NF-kappa-B inhibitor-interacting Ras-like protein 2 (nkiras2), found in Xenopus laevis (African clawed frog).